The chain runs to 211 residues: Uracil phosphoribosyltransferase (211 aa).

Residues R79, R104, and 131-139 (DPMLATGGS) each bind 5-phospho-alpha-D-ribose 1-diphosphate. Residues I196 and 201–203 (GDA) contribute to the uracil site. Residue D202 participates in 5-phospho-alpha-D-ribose 1-diphosphate binding.

The protein belongs to the UPRTase family. Mg(2+) is required as a cofactor.

It catalyses the reaction UMP + diphosphate = 5-phospho-alpha-D-ribose 1-diphosphate + uracil. Its pathway is pyrimidine metabolism; UMP biosynthesis via salvage pathway; UMP from uracil: step 1/1. Its activity is regulated as follows. Allosterically activated by GTP. Catalyzes the conversion of uracil and 5-phospho-alpha-D-ribose 1-diphosphate (PRPP) to UMP and diphosphate. The sequence is that of Uracil phosphoribosyltransferase from Limosilactobacillus fermentum (strain NBRC 3956 / LMG 18251) (Lactobacillus fermentum).